A 496-amino-acid polypeptide reads, in one-letter code: UDP-N-acetylmuramoylalanine--D-glutamate ligase (496 aa).

130–136 (GTNGKTT) is an ATP binding site.

Belongs to the MurCDEF family. As to quaternary structure, interacts with PknA. In terms of processing, phosphorylated by PknA.

The protein resides in the cytoplasm. The catalysed reaction is UDP-N-acetyl-alpha-D-muramoyl-L-alanine + D-glutamate + ATP = UDP-N-acetyl-alpha-D-muramoyl-L-alanyl-D-glutamate + ADP + phosphate + H(+). It functions in the pathway cell wall biogenesis; peptidoglycan biosynthesis. Cell wall formation. Catalyzes the addition of glutamate to the nucleotide precursor UDP-N-acetylmuramoyl-L-alanine (UMA). In Mycobacterium tuberculosis (strain ATCC 25177 / H37Ra), this protein is UDP-N-acetylmuramoylalanine--D-glutamate ligase.